We begin with the raw amino-acid sequence, 561 residues long: Chaperonin GroEL 1 (561 aa).

ATP contacts are provided by residues 29–32, 86–90, G413, and D495; these read TMGP and DGTTT.

Belongs to the chaperonin (HSP60) family. In terms of assembly, forms a cylinder of 14 subunits composed of two heptameric rings stacked back-to-back. Interacts with the co-chaperonin GroES.

It localises to the cytoplasm. The catalysed reaction is ATP + H2O + a folded polypeptide = ADP + phosphate + an unfolded polypeptide.. In terms of biological role, together with its co-chaperonin GroES, plays an essential role in assisting protein folding. The GroEL-GroES system forms a nano-cage that allows encapsulation of the non-native substrate proteins and provides a physical environment optimized to promote and accelerate protein folding. This is Chaperonin GroEL 1 from Trichodesmium erythraeum (strain IMS101).